We begin with the raw amino-acid sequence, 534 residues long: Inosine-5'-monophosphate dehydrogenase (534 aa).

CBS domains lie at Tyr117–Ile181 and Thr190–Ser255. NAD(+) contacts are provided by residues Asp292–Ser294 and Gly342–Gly344. The K(+) site is built by Gly344 and Gly346. Ser347 is a binding site for IMP. Residue Cys349 participates in K(+) binding. Cys349 functions as the Thioimidate intermediate in the catalytic mechanism. IMP is bound by residues Asp382–Gly384, Gly405–Gly406, and Tyr430–Gly434. The active-site Proton acceptor is the Arg448. Gln461 serves as a coordination point for IMP. Residues Glu520, Gly521, and Gly522 each contribute to the K(+) site.

It belongs to the IMPDH/GMPR family. In terms of assembly, homotetramer. The cofactor is K(+).

It localises to the cytoplasm. The enzyme catalyses IMP + NAD(+) + H2O = XMP + NADH + H(+). It participates in purine metabolism; XMP biosynthesis via de novo pathway; XMP from IMP: step 1/1. With respect to regulation, mycophenolic acid (MPA) is a non-competitive inhibitor that prevents formation of the closed enzyme conformation by binding to the same site as the amobile flap. In contrast, mizoribine monophosphate (MZP) is a competitive inhibitor that induces the closed conformation. MPA is a potent inhibitor of mammalian IMPDHs but a poor inhibitor of the bacterial enzymes. MZP is a more potent inhibitor of bacterial IMPDH. Functionally, catalyzes the conversion of inosine 5'-phosphate (IMP) to xanthosine 5'-phosphate (XMP), the first committed and rate-limiting step in the de novo synthesis of guanine nucleotides, and therefore plays an important role in the regulation of cell growth. The chain is Inosine-5'-monophosphate dehydrogenase from Caenorhabditis elegans.